The sequence spans 130 residues: Large ribosomal subunit protein eL22 (130 aa).

This sequence belongs to the eukaryotic ribosomal protein eL22 family.

The chain is Large ribosomal subunit protein eL22 (rpl-22) from Caenorhabditis elegans.